The following is a 195-amino-acid chain: uncharacterized protein (195 aa).

One can recognise an HD domain in the interval N24–D141.

This is an uncharacterized protein from Lactococcus lactis subsp. cremoris (Streptococcus cremoris).